Reading from the N-terminus, the 269-residue chain is Triosephosphate isomerase (269 aa).

8–10 (NWK) provides a ligand contact to substrate. His105 (electrophile) is an active-site residue. The active-site Proton acceptor is the Glu183. Substrate contacts are provided by residues Gly189, Ser227, and 248–249 (GG).

It belongs to the triosephosphate isomerase family. Homodimer.

The protein resides in the cytoplasm. It carries out the reaction D-glyceraldehyde 3-phosphate = dihydroxyacetone phosphate. It participates in carbohydrate biosynthesis; gluconeogenesis. It functions in the pathway carbohydrate degradation; glycolysis; D-glyceraldehyde 3-phosphate from glycerone phosphate: step 1/1. In terms of biological role, involved in the gluconeogenesis. Catalyzes stereospecifically the conversion of dihydroxyacetone phosphate (DHAP) to D-glyceraldehyde-3-phosphate (G3P). The polypeptide is Triosephosphate isomerase (Psychrobacter arcticus (strain DSM 17307 / VKM B-2377 / 273-4)).